A 439-amino-acid polypeptide reads, in one-letter code: GTPase Der (439 aa).

2 consecutive EngA-type G domains span residues 2–167 (PTVL…ESKG) and 182–358 (IRVS…KSLH). GTP is bound by residues 8-15 (GKSNVGKS), 55-59 (DTGGI), 118-121 (NKSE), 188-195 (GRPNAGKS), 235-239 (DTAGL), and 301-304 (NKID). The 81-residue stretch at 359 to 439 (YRVQTSAVNS…PIFLKFKSRH (81 aa)) folds into the KH-like domain.

This sequence belongs to the TRAFAC class TrmE-Era-EngA-EngB-Septin-like GTPase superfamily. EngA (Der) GTPase family. As to quaternary structure, associates with the 50S ribosomal subunit.

Its function is as follows. GTPase that plays an essential role in the late steps of ribosome biogenesis. The polypeptide is GTPase Der (Thermosipho africanus (strain TCF52B)).